Consider the following 598-residue polypeptide: MFASRIRSRALGLHPRARFENTRLPASTTGRRYKSDETLNRVSSKITQPKSQGASQAMLYATGLTEEDMSKPQVGISSVWFEGNPCNMHLHDLSAIVRDSVHRAGLVPMRFNSVGVSDGISMGTKGMRYSLQSRELIADGIETVMNAQWYDANVSLPGCDKNMPGVLMAMGRTNRPSIMVYGGSIKPGCSAKGQKLDLVSAFQSYGQFITGQIDEKERFDIIRNACPGRGACGGMYTANTLATAIETMGMTVPGSSSCPADDPKKLVECENIGEVVKTMLREDIKPRDVLTRQAFENAMIVVNILGGSTNAVLHLIAIADSVGIKLTIDDFQAVSDKTPFLADLKPSGKYLMNDLYNIGGTPALLKYLLKEGLIDGSGITVTGKTMKENVASWPDFPADQDIIRPLSNPIKPSGHLQILRGSLAPGGSVGKITGKEGLRFEGTAKCYDYEDAFIESLERGEIKKGEKTVVIIRYEGPKGGPGMPEMLKPSAAIMGAGLGQDVALLTDGRFSGGSHGFLIGHIVPEAMEGGPIALARDGDRIVIDAEERVVDLDIPTEELEKRRKEWKAPPLRYQKGTLKKYCTLVSDASHGCVTDGPI.

The N-terminal 111 residues, 1–111, are a transit peptide targeting the mitochondrion; sequence MFASRIRSRA…HRAGLVPMRF (111 aa). Residues 23–50 form a disordered region; sequence RLPASTTGRRYKSDETLNRVSSKITQPK. The span at 40 to 50 shows a compositional bias: polar residues; the sequence is NRVSSKITQPK. Cysteine 86 contributes to the [2Fe-2S] cluster binding site. Aspartate 118 serves as a coordination point for Mg(2+). [2Fe-2S] cluster is bound at residue cysteine 159. Aspartate 160 contacts Mg(2+). Cysteine 232 is a [2Fe-2S] cluster binding site. A Mg(2+)-binding site is contributed by glutamate 485. Serine 511 (proton acceptor) is an active-site residue.

This sequence belongs to the IlvD/Edd family. [2Fe-2S] cluster is required as a cofactor. It depends on Mg(2+) as a cofactor.

Its subcellular location is the mitochondrion. It catalyses the reaction (2R)-2,3-dihydroxy-3-methylbutanoate = 3-methyl-2-oxobutanoate + H2O. The enzyme catalyses (2R,3R)-2,3-dihydroxy-3-methylpentanoate = (S)-3-methyl-2-oxopentanoate + H2O. It functions in the pathway amino-acid biosynthesis; L-isoleucine biosynthesis; L-isoleucine from 2-oxobutanoate: step 3/4. It participates in amino-acid biosynthesis; L-valine biosynthesis; L-valine from pyruvate: step 3/4. With respect to regulation, DHAD activity is not inhibited by the dihydroxyacid dehydratase inhibitor aspterric acid (AA). In terms of biological role, dihydroxyacid dehydratase; part of the gene cluster that mediates the biosynthesis of the sesquiterpenoid aspterric acid (AA), an inhibitor of dihydroxy-acid dehydratase (DHAD) effective as an herbicide. Performs the third step in the common pathway leading to biosynthesis of branched-chain amino acids. Catalyzes the dehydration of (2R,3R)-2,3-dihydroxy-3-methylpentanoate (2,3-dihydroxy-3-methylvalerate) into 2-oxo-3-methylpentanoate (2-oxo-3-methylvalerate) and of (2R)-2,3-dihydroxy-3-methylbutanoate (2,3-dihydroxyisovalerate) into 2-oxo-3-methylbutanoate (2-oxoisovalerate), the penultimate precursor to L-isoleucine and L-valine, respectively. AstD confers self-resistance in the presence of the dihydroxyacid dehydratase inhibitor aspterric acid (AA) produced by the ast cluster. This chain is Dihydroxy-acid dehydratase astD, mitochondrial, found in Aspergillus terreus (strain NIH 2624 / FGSC A1156).